Consider the following 165-residue polypeptide: Cytochrome c-550-like protein (165 aa).

An N-terminal signal peptide occupies residues methionine 1–alanine 38. Heme c-binding residues include cysteine 83, cysteine 86, histidine 87, and cysteine 137.

This sequence belongs to the cytochrome c family. PsbV subfamily. It depends on heme c as a cofactor.

The protein resides in the cellular thylakoid membrane. Possible low-potential cytochrome c. The polypeptide is Cytochrome c-550-like protein (psbV2) (Synechococcus sp. (strain JA-2-3B'a(2-13)) (Cyanobacteria bacterium Yellowstone B-Prime)).